A 145-amino-acid polypeptide reads, in one-letter code: D-aminoacyl-tRNA deacylase (145 aa).

Positions 137-138 match the Gly-cisPro motif, important for rejection of L-amino acids motif; sequence GP.

Belongs to the DTD family. As to quaternary structure, homodimer.

The protein resides in the cytoplasm. It catalyses the reaction glycyl-tRNA(Ala) + H2O = tRNA(Ala) + glycine + H(+). The catalysed reaction is a D-aminoacyl-tRNA + H2O = a tRNA + a D-alpha-amino acid + H(+). An aminoacyl-tRNA editing enzyme that deacylates mischarged D-aminoacyl-tRNAs. Also deacylates mischarged glycyl-tRNA(Ala), protecting cells against glycine mischarging by AlaRS. Acts via tRNA-based rather than protein-based catalysis; rejects L-amino acids rather than detecting D-amino acids in the active site. By recycling D-aminoacyl-tRNA to D-amino acids and free tRNA molecules, this enzyme counteracts the toxicity associated with the formation of D-aminoacyl-tRNA entities in vivo and helps enforce protein L-homochirality. This Salmonella paratyphi A (strain AKU_12601) protein is D-aminoacyl-tRNA deacylase.